A 371-amino-acid chain; its full sequence is Heterodimeric geranylgeranyl pyrophosphate synthase large subunit 1, chloroplastic (371 aa).

The transit peptide at 1–51 (MASVTLGSWIVVHHHNHHHPSSILTKSRSRSCPITLTKPISFRSKRTVSSS) directs the protein to the chloroplast. Ser-52 carries the post-translational modification N-acetylserine. Residues Lys-116, Arg-119, and His-148 each coordinate isopentenyl diphosphate. Mg(2+)-binding residues include Asp-155 and Asp-161. Arg-166 contacts dimethylallyl diphosphate. Arg-167 contributes to the isopentenyl diphosphate binding site. Residues Lys-256, Thr-257, Gln-294, Lys-311, and Lys-321 each coordinate dimethylallyl diphosphate.

Belongs to the FPP/GGPP synthase family. Forms homodimers. Part of a heterodimeric geranyl(geranyl)diphosphate synthase. Interacts with GGR. Mg(2+) is required as a cofactor. Expressed ubiquitously.

Its subcellular location is the plastid. The protein localises to the chloroplast. It is found in the cytoplasm. It carries out the reaction isopentenyl diphosphate + dimethylallyl diphosphate = (2E)-geranyl diphosphate + diphosphate. It catalyses the reaction isopentenyl diphosphate + (2E)-geranyl diphosphate = (2E,6E)-farnesyl diphosphate + diphosphate. The enzyme catalyses isopentenyl diphosphate + (2E,6E)-farnesyl diphosphate = (2E,6E,10E)-geranylgeranyl diphosphate + diphosphate. The protein operates within isoprenoid biosynthesis; farnesyl diphosphate biosynthesis; farnesyl diphosphate from geranyl diphosphate and isopentenyl diphosphate: step 1/1. Its pathway is isoprenoid biosynthesis; geranyl diphosphate biosynthesis; geranyl diphosphate from dimethylallyl diphosphate and isopentenyl diphosphate: step 1/1. It functions in the pathway isoprenoid biosynthesis; geranylgeranyl diphosphate biosynthesis; geranylgeranyl diphosphate from farnesyl diphosphate and isopentenyl diphosphate: step 1/1. In terms of biological role, heterodimeric geranyl(geranyl)-diphosphate (GPP) synthase large subunit. In vitro, the large subunit catalyzes mainly the trans-addition of the three molecules of IPP onto DMAPP to form geranylgeranyl pyrophosphate while the small subunit alone is inactive. Upon association of the two subunits, the product profile changes and the production of gerany-diphosphate is strongly increased. The sequence is that of Heterodimeric geranylgeranyl pyrophosphate synthase large subunit 1, chloroplastic (GGPPS1) from Arabidopsis thaliana (Mouse-ear cress).